A 414-amino-acid polypeptide reads, in one-letter code: Isocitrate dehydrogenase [NADP] cytoplasmic (414 aa).

Position 2 is an N-acetylserine (Ser-2). Tyr-42 carries the post-translational modification Phosphotyrosine. 75–77 (TIT) serves as a coordination point for NADP(+). Position 77 (Thr-77) interacts with substrate. Residue Lys-81 is modified to N6-acetyllysine. Arg-82 contacts NADP(+). Substrate-binding positions include 94–100 (SPNGTIR) and Arg-109. Lys-126 is subject to N6-succinyllysine. The substrate site is built by Arg-132 and Lys-212. N6-acetyllysine occurs at positions 224, 233, and 243. Position 252 (Asp-252) interacts with Mn(2+). Lys-260 serves as a coordination point for NADP(+). 2 residues coordinate Mn(2+): Asp-275 and Asp-279. 310 to 315 (GTVTRH) provides a ligand contact to NADP(+). Lys-321 carries the post-translational modification N6-acetyllysine. Asn-328 serves as a coordination point for NADP(+). Ser-389 carries the phosphoserine modification. The residue at position 400 (Lys-400) is an N6-succinyllysine.

Belongs to the isocitrate and isopropylmalate dehydrogenases family. In terms of assembly, homodimer. Mg(2+) serves as cofactor. Requires Mn(2+) as cofactor. Post-translationally, acetylation at Lys-374 dramatically reduces catalytic activity.

Its subcellular location is the cytoplasm. The protein resides in the cytosol. It is found in the peroxisome. The catalysed reaction is D-threo-isocitrate + NADP(+) = 2-oxoglutarate + CO2 + NADPH. In terms of biological role, catalyzes the NADP(+)-dependent oxidative decarboxylation of isocitrate (D-threo-isocitrate) to 2-ketoglutarate (2-oxoglutarate), which is required by other enzymes such as the phytanoyl-CoA dioxygenase. Plays a critical role in the generation of NADPH, an important cofactor in many biosynthesis pathways. May act as a corneal epithelial crystallin and may be involved in maintaining corneal epithelial transparency. The chain is Isocitrate dehydrogenase [NADP] cytoplasmic (IDH1) from Homo sapiens (Human).